A 484-amino-acid polypeptide reads, in one-letter code: Replication-associated protein (484 aa).

The short motif at Ile-146–Val-153 is the Nuclear localization signal element.

It localises to the host nucleus. Functionally, plays an essential for the replication of viral DNA. Presumably cleaves viral genomic dsRNA replicative form to initiate rolling circle replication. The chain is Replication-associated protein from Chaetoceros (Chaetoceros sp. DNA virus 7).